The following is a 123-amino-acid chain: Small ribosomal subunit protein uS12 (123 aa).

Asp89 is modified (3-methylthioaspartic acid).

It belongs to the universal ribosomal protein uS12 family. In terms of assembly, part of the 30S ribosomal subunit. Contacts proteins S8 and S17. May interact with IF1 in the 30S initiation complex.

Functionally, with S4 and S5 plays an important role in translational accuracy. Interacts with and stabilizes bases of the 16S rRNA that are involved in tRNA selection in the A site and with the mRNA backbone. Located at the interface of the 30S and 50S subunits, it traverses the body of the 30S subunit contacting proteins on the other side and probably holding the rRNA structure together. The combined cluster of proteins S8, S12 and S17 appears to hold together the shoulder and platform of the 30S subunit. This chain is Small ribosomal subunit protein uS12, found in Methylorubrum extorquens (strain PA1) (Methylobacterium extorquens).